The primary structure comprises 239 residues: Putative CCR4-associated factor 1 homolog 8 (239 aa).

A divalent metal cation-binding residues include Asp-17, Glu-19, Asp-133, and Asn-204.

Belongs to the CAF1 family. Component of the CCR4-NOT complex, at least composed of CRR4 and CAF1 proteins. Requires a divalent metal cation as cofactor.

The protein resides in the nucleus. It localises to the cytoplasm. The catalysed reaction is Exonucleolytic cleavage of poly(A) to 5'-AMP.. Ubiquitous transcription factor required for a diverse set of processes. It is a component of the CCR4 complex involved in the control of gene expression. In Arabidopsis thaliana (Mouse-ear cress), this protein is Putative CCR4-associated factor 1 homolog 8 (CAF1-8).